Here is a 290-residue protein sequence, read N- to C-terminus: UPF0761 membrane protein YihY (290 aa).

The next 6 helical transmembrane spans lie at 44–64 (LLSL…FPMF), 104–124 (VGAC…DSAL), 140–160 (FAVY…SLAI), 183–203 (IFPL…VPTI), 210–230 (AIVG…GFAL), and 244–264 (VLAV…IVLL).

Belongs to the UPF0761 family.

Its subcellular location is the cell inner membrane. This is UPF0761 membrane protein YihY from Shigella sonnei (strain Ss046).